Consider the following 161-residue polypeptide: Ribonuclease P protein component (161 aa).

It belongs to the RnpA family. Consists of a catalytic RNA component (M1 or rnpB) and a protein subunit.

The catalysed reaction is Endonucleolytic cleavage of RNA, removing 5'-extranucleotides from tRNA precursor.. Its function is as follows. RNaseP catalyzes the removal of the 5'-leader sequence from pre-tRNA to produce the mature 5'-terminus. It can also cleave other RNA substrates such as 4.5S RNA. The protein component plays an auxiliary but essential role in vivo by binding to the 5'-leader sequence and broadening the substrate specificity of the ribozyme. In Helicobacter pylori (strain J99 / ATCC 700824) (Campylobacter pylori J99), this protein is Ribonuclease P protein component.